A 218-amino-acid chain; its full sequence is MPDLSLERACGGRVAGVDEVGRGPLAGPVVAAAVVIDAGRADPALLARLDDSKKLSAALRQRLATALLADPGVEVGLGEASVAEIDRINILQATFLAMGRALAKLAPPVDLALVDGNRLPPLPCPGQAVVRGDGLSLSIAAASIVAKVHRDAAMATLAQALPGYGWERNAGYGTAEHLAALDRLGATPHHRASFAPVREALARSALPGHKCVTALTFS.

One can recognise an RNase H type-2 domain in the interval 12–206 (GRVAGVDEVG…VREALARSAL (195 aa)). 3 residues coordinate a divalent metal cation: D18, E19, and D115.

This sequence belongs to the RNase HII family. Mn(2+) serves as cofactor. It depends on Mg(2+) as a cofactor.

The protein localises to the cytoplasm. It catalyses the reaction Endonucleolytic cleavage to 5'-phosphomonoester.. Its function is as follows. Endonuclease that specifically degrades the RNA of RNA-DNA hybrids. This chain is Ribonuclease HII, found in Rhodospirillum rubrum (strain ATCC 11170 / ATH 1.1.1 / DSM 467 / LMG 4362 / NCIMB 8255 / S1).